A 324-amino-acid polypeptide reads, in one-letter code: Reaction center protein M chain (324 aa).

At 2–51 (ADYQTIYTQIQARGPHITVSGEWGDNDRVGKPFYSYWLGKIGDAQIGPIY) the chain is on the cytoplasmic side. A helical membrane pass occupies residues 52-76 (LGASGIAAFAFGSTAILIILFNMAA). Topologically, residues 77–110 (EVHFDPLQFFRQFFWLGLYPPKAQYGMGIPPLHD) are periplasmic. A helical membrane pass occupies residues 111-137 (GGWWLMAGLFMTLSLGSWWIRVYSRAR). The Cytoplasmic portion of the chain corresponds to 138–142 (ALGLG). The helical transmembrane segment at 143-166 (THIAWNFAAAIFFVLCIGCIHPTL) threads the bilayer. Topologically, residues 167–197 (VGSWSEGVPFGIWPHIDWLTAFSIRYGNFYY) are periplasmic. His181 and His201 together coordinate (7R,8Z)-bacteriochlorophyll b. A helical membrane pass occupies residues 198-223 (CPWHGFSIGFAYGCGLLFAAHGATIL). Residues His218 and Glu233 each contribute to the Fe cation site. The Cytoplasmic portion of the chain corresponds to 224–259 (AVARFGGDREIEQITDRGTAVERAALFWRWTIGFNA). Trp251 contacts a ubiquinone. Residues 260–284 (TIESVHRWGWFFSLMVMVSASVGIL) form a helical membrane-spanning segment. His265 contacts Fe cation. Residues 285-324 (LTGTFVDNWYLWCVKHGAAPDYPAYLPATPDPASLPGAPK) are Periplasmic-facing.

This sequence belongs to the reaction center PufL/M/PsbA/D family. In terms of assembly, reaction center is composed of four bacteriochlorophylls, two bacteriopheophytins, two ubiquinones, one iron, and three highly hydrophobic polypeptide chains (designated L, M, and H).

The protein localises to the cellular chromatophore membrane. Functionally, the reaction center is a membrane-bound complex that mediates the initial photochemical event in the electron transfer process of photosynthesis. The protein is Reaction center protein M chain (pufM) of Blastochloris viridis (Rhodopseudomonas viridis).